A 138-amino-acid chain; its full sequence is Large ribosomal subunit protein uL16 (138 aa).

Over residues 1-15 (MLSPKKVKYRKKQRG) the composition is skewed to basic residues. Residues 1–20 (MLSPKKVKYRKKQRGRLSGE) are disordered.

It belongs to the universal ribosomal protein uL16 family. In terms of assembly, part of the 50S ribosomal subunit.

Binds 23S rRNA and is also seen to make contacts with the A and possibly P site tRNAs. The protein is Large ribosomal subunit protein uL16 of Borrelia hermsii (strain HS1 / DAH).